A 691-amino-acid polypeptide reads, in one-letter code: DNA topoisomerase 1 (691 aa).

In terms of domain architecture, Toprim spans 3–114 (DYLVIVESPA…DCRVVFNEIT (112 aa)). Glu-9 and Asp-82 together coordinate Mg(2+). Residues 129–558 (NMDLVDAQQA…NFYTDFEKRV (430 aa)) form the Topo IA-type catalytic domain. The interval 163–168 (SAGRVQ) is interaction with DNA. Residue Tyr-298 is the O-(5'-phospho-DNA)-tyrosine intermediate of the active site. 3 C4-type zinc fingers span residues 579 to 605 (CELCSSPMVYKMGRYGKFLACSNFPDC), 619 to 647 (CPSCGEGNIVERKSKKKRVFYGCDRYPDC), and 660 to 683 (CPKCGKMLVEKKLKKGIQVQCVEC).

It belongs to the type IA topoisomerase family. As to quaternary structure, monomer. Interacts with the RNA polymerase core. Requires Mg(2+) as cofactor.

It carries out the reaction ATP-independent breakage of single-stranded DNA, followed by passage and rejoining.. Functionally, releases the supercoiling and torsional tension of DNA, which is introduced during the DNA replication and transcription, by transiently cleaving and rejoining one strand of the DNA duplex. Introduces a single-strand break via transesterification at a target site in duplex DNA. The scissile phosphodiester is attacked by the catalytic tyrosine of the enzyme, resulting in the formation of a DNA-(5'-phosphotyrosyl)-enzyme intermediate and the expulsion of a 3'-OH DNA strand. The free DNA strand then undergoes passage around the unbroken strand, thus removing DNA supercoils. Finally, in the religation step, the DNA 3'-OH attacks the covalent intermediate to expel the active-site tyrosine and restore the DNA phosphodiester backbone. This chain is DNA topoisomerase 1, found in Bacillus subtilis (strain 168).